Here is a 178-residue protein sequence, read N- to C-terminus: Ribosome maturation factor RimP (178 aa).

It belongs to the RimP family.

It is found in the cytoplasm. Required for maturation of 30S ribosomal subunits. The polypeptide is Ribosome maturation factor RimP (Streptococcus pyogenes serotype M1).